A 306-amino-acid chain; its full sequence is MASPSCLWLLAVALLPWTCAARALHHLDPPAPLPLVIWHGMGDSCCNPLSMGAIKKMVEKKIPGIYVLSLEIGKTLMEDVENSFFLNVNSQVTTVCQTLAKDPKLQQGYNAMGFSQGGQFLRAVAQRCPSPPMINLISVGGQHQGVFGLPRCPGESSHICDFIRKTLNAGAYSKVVQERLVQAEYWHDPIKEDVYRNHSIFLADINQERGINESYKKNLMALKKFVMVKFLNDSIVDPVDSEWFGFYRSGQAKETIPLQETSLYTQDRLGLKEMDNAGQLVFLATEGDHLQLSEEWFYAHIIPFLG.

An N-terminal signal peptide occupies residues 1–27 (MASPSCLWLLAVALLPWTCAARALHHL). 3 disulfides stabilise this stretch: C45-C46, C96-C128, and C152-C160. Residue S115 is part of the active site. N-linked (GlcNAc...) asparagine glycosylation is found at N197, N212, and N232. Active-site residues include D233 and H289.

Belongs to the palmitoyl-protein thioesterase family. In terms of assembly, interacts with CLN5, ATP5F1A and ATP5F1B. Post-translationally, glycosylated.

The protein localises to the lysosome. It is found in the secreted. It localises to the golgi apparatus. Its subcellular location is the endoplasmic reticulum. The catalysed reaction is S-hexadecanoyl-L-cysteinyl-[protein] + H2O = L-cysteinyl-[protein] + hexadecanoate + H(+). It catalyses the reaction hexadecanoyl-CoA + H2O = hexadecanoate + CoA + H(+). The enzyme catalyses S-hexadecanoyl-N-acetylcysteamine + H2O = N-acetylcysteamine + hexadecanoate + H(+). It carries out the reaction S-hexadecanoyl-N-acetylcysteine methyl ester + H2O = N-acetylcysteine methyl ester + hexadecanoate + H(+). With respect to regulation, palmitoylation reduces PPT1 enzymatic activity. In terms of biological role, has thioesterase activity against fatty acid thioesters with 14 -18 carbons, including palmitoyl-CoA, S-palmitoyl-N-acetylcysteamine, and palmitoylated proteins. In contrast to PPT2, PPT1 can hydrolyze palmitoylated proteins and palmitoylcysteine. The protein is Palmitoyl-protein thioesterase 1 (PPT1) of Macaca fascicularis (Crab-eating macaque).